Here is a 324-residue protein sequence, read N- to C-terminus: Alkanal monooxygenase beta chain (324 aa).

It belongs to the bacterial luciferase oxidoreductase family. As to quaternary structure, heterodimer of an alpha and a beta chain.

The catalysed reaction is a long-chain fatty aldehyde + FMNH2 + O2 = a long-chain fatty acid + hnu + FMN + H2O + 2 H(+). Light-emitting reaction in luminous bacteria. The specific role of the beta subunit is unknown, but it is absolutely required for bioluminescence activity. In Vibrio harveyi (Beneckea harveyi), this protein is Alkanal monooxygenase beta chain (luxB).